The chain runs to 180 residues: MKPQIDVIHGDITTMHVDVIVNAANPSLMGGGGVDGAIHRAAGPQLLEACKTVRQQQGECPPGHAVITLAGDLPAKAVIHAVGPIWHGGDRHEASILEEAYRNCLRLAADNGYKTMAFPAISTGVYGYPKAAAATIAVDTVYRYLSLKPMPEKVTFVCFDEETLHLYQRLLTQRGQELEI.

The Macro domain maps to 1–175 (MKPQIDVIHG…LYQRLLTQRG (175 aa)). Substrate-binding positions include 11 to 12 (DI), Asn-25, 33 to 35 (GVD), and 122 to 126 (STGVY). The Proton acceptor role is filled by Asp-35.

This sequence belongs to the MacroD-type family. YmdB subfamily. In terms of assembly, homodimer. Interacts with RNase III.

It carries out the reaction 3''-O-acetyl-ADP-D-ribose + H2O = ADP-D-ribose + acetate + H(+). The catalysed reaction is 2''-O-acetyl-ADP-D-ribose + H2O = ADP-D-ribose + acetate + H(+). In terms of biological role, deacetylates O-acetyl-ADP ribose to yield ADP-ribose and free acetate. Down-regulates ribonuclease 3 (RNase III) activity. Acts by interacting directly with the region of the ribonuclease that is required for dimerization/activation. The sequence is that of O-acetyl-ADP-ribose deacetylase from Enterobacter cloacae subsp. cloacae (strain ATCC 13047 / DSM 30054 / NBRC 13535 / NCTC 10005 / WDCM 00083 / NCDC 279-56).